The primary structure comprises 300 residues: Probable L-serine dehydratase, alpha chain (300 aa).

Belongs to the iron-sulfur dependent L-serine dehydratase family. In terms of assembly, heterodimer of an alpha chain and a beta chain. [4Fe-4S] cluster is required as a cofactor.

The catalysed reaction is L-serine = pyruvate + NH4(+). It participates in carbohydrate biosynthesis; gluconeogenesis. In Bacillus subtilis (strain 168), this protein is Probable L-serine dehydratase, alpha chain (sdaAA).